The following is a 225-amino-acid chain: 2-C-methyl-D-erythritol 4-phosphate cytidylyltransferase (225 aa).

Belongs to the IspD/TarI cytidylyltransferase family. IspD subfamily.

The catalysed reaction is 2-C-methyl-D-erythritol 4-phosphate + CTP + H(+) = 4-CDP-2-C-methyl-D-erythritol + diphosphate. It functions in the pathway isoprenoid biosynthesis; isopentenyl diphosphate biosynthesis via DXP pathway; isopentenyl diphosphate from 1-deoxy-D-xylulose 5-phosphate: step 2/6. In terms of biological role, catalyzes the formation of 4-diphosphocytidyl-2-C-methyl-D-erythritol from CTP and 2-C-methyl-D-erythritol 4-phosphate (MEP). The polypeptide is 2-C-methyl-D-erythritol 4-phosphate cytidylyltransferase (Haemophilus influenzae (strain PittEE)).